A 497-amino-acid polypeptide reads, in one-letter code: CRISPR-associated endodeoxyribonuclease Cas12f1 (497 aa).

A recognition domain (REC) region spans residues 29 to 122 (RKDLSTMSRF…PTYKITTAPI (94 aa)). The wedge domain (WED) stretch occupies residues 123–214 (RLQNNIYKLI…YCIIPYTFPT (92 aa)). A linker region spans residues 215–223 (HETVLDPDK). The segment at 224-374 (VMGVDLGVAK…VAINPQYTSQ (151 aa)) is ruvC-I. Residues Asp228 and Glu327 contribute to the active site. The tract at residues 375-432 (RCSMCGYIEKTNRSSQAVFECKQCGYGSRTICINCRHVQVSGDVCEECGGIVKKENVN) is target nucleic acid-binding (TNB). Residues Cys376, Cys379, Cys395, and Cys398 each coordinate Zn(2+). The segment at 433–453 (ADYNAAKNISTPYIDQIIMEK) is ruvC-II. The active site involves Asp434.

Belongs to the CRISPR-associated endonuclease Cas12f family. As to quaternary structure, an asymmetric homodimer. Guide RNA is probably required for dimerization. Mg(2+) is required as a cofactor. Zn(2+) serves as cofactor.

In terms of biological role, CRISPR (clustered regularly interspaced short palindromic repeat), is an adaptive immune system that provides protection against mobile genetic elements (viruses, transposable elements and conjugative plasmids). CRISPR clusters contain sequences complementary to antecedent mobile elements and target invading nucleic acids. CRISPR clusters are transcribed and processed into CRISPR RNA (crRNA), which requires a trans-encoded small RNA (tracrRNA), but not this protein. Recognizes a short motif in the CRISPR repeat sequences (the 5' PAM or protospacer adjacent motif, TTC in this organism) to help distinguish self versus nonself, as targets within the CRISPR locus do not have PAMs. Has dsDNA endonuclease activity upon expression in E.coli of this protein, a mini CRISPR array and the probable tracrRNA. Plasmid cleavage is centered around positions 24 base pairs 3' of PAM. The mini system protects E.coli against transformation by foreign plasmids. The polypeptide is CRISPR-associated endodeoxyribonuclease Cas12f1 (Syntrophomonas palmitatica (strain DSM 18709 / JCM 14374 / NBRC 102128 / MPA)).